Consider the following 244-residue polypeptide: Ribonuclease PH (244 aa).

Residues Arg86 and Gly124–Arg126 each bind phosphate.

The protein belongs to the RNase PH family. As to quaternary structure, homohexameric ring arranged as a trimer of dimers.

The enzyme catalyses tRNA(n+1) + phosphate = tRNA(n) + a ribonucleoside 5'-diphosphate. Phosphorolytic 3'-5' exoribonuclease that plays an important role in tRNA 3'-end maturation. Removes nucleotide residues following the 3'-CCA terminus of tRNAs; can also add nucleotides to the ends of RNA molecules by using nucleoside diphosphates as substrates, but this may not be physiologically important. Probably plays a role in initiation of 16S rRNA degradation (leading to ribosome degradation) during starvation. This Glaesserella parasuis serovar 5 (strain SH0165) (Haemophilus parasuis) protein is Ribonuclease PH.